The chain runs to 571 residues: L-erythrulose 1-kinase (571 aa).

In terms of domain architecture, DhaK spans 7-331 (SPDDFADEAV…WTAPVETPAY (325 aa)). His217 acts as the Tele-hemiaminal-histidine intermediate in catalysis. The region spanning 367–567 (RNIVAVLETF…FAMLMKALGE (201 aa)) is the DhaL domain. Residues 396 to 402 (DGDHGQG), 442 to 443 (TS), Gly484, Arg539, and 552 to 554 (DPG) each bind ATP.

The enzyme catalyses L-erythrulose + ATP = L-erythrulose 1-phosphate + ADP + H(+). It participates in carbohydrate metabolism; L-threitol degradation. Kinase that has a preference for L-erythrulose, producing L-erythrulose-1P. Involved in the degradation pathway of L-threitol, that allows M.smegmatis to grow on this compound as the sole carbon source. Is also able to phosphorylate D-erythrulose and dihydroxyacetone in vitro. The chain is L-erythrulose 1-kinase from Mycolicibacterium smegmatis (strain ATCC 700084 / mc(2)155) (Mycobacterium smegmatis).